Here is a 106-residue protein sequence, read N- to C-terminus: Iron-sulfur cluster assembly protein CyaY (106 aa).

The protein belongs to the frataxin family.

Functionally, involved in iron-sulfur (Fe-S) cluster assembly. May act as a regulator of Fe-S biogenesis. In Yersinia pseudotuberculosis serotype O:3 (strain YPIII), this protein is Iron-sulfur cluster assembly protein CyaY.